The chain runs to 661 residues: MVEHVPFKLKSEFEPQGDQPQAIQKIVDGVNEGKRHQTLLGATGTGKTFTMSNVIKEVGKPTLIIAHNKTLAGQLYSEFKEFFPENRVEYFVSYYDYYQPEAYVPSTDTFIEKDASINDEIDQLRHSATSSLFERDDVIIIASVSCIYGLGNPEEYKNLVVSVRVGMEMERSELLRKLVDVQYSRNDIDFQRGTFRVRGDVVEIFPASREEMCIRVEFFGDEIDRIREVNYLTGEVIREREHFTIFPASHFVTREEKMKVAIERIEKELEERLKELRDENKLLEAQRLEQRTNYDLEMMREMGFCSGIENYSVHLTLRPLGSTPYTLLDYFGDDWLVMIDESHVTLPQIRGMYNGDRARKQVLIDHGFRLPSALDNRPLKFEEFEEKTKQLVYVSATPGPYELEHTDEMVEQIIRPTGLLDPKIDVRPTENQIDDLLSEIQDRVDKDERVLVTTLTKKMSEDLTTYMKEAGIKVNYLHSEIKTLERIEIIRDLRMGTYDAIVGINLLREGIDIPEVSLVVILDADKEGFLRSDRSLIQTIGRAARNDKGEVIMYADKITDSMQYAIDETQRRREIQIAHNKEHGITPKTINKKIHDVISATVESDETNQQQQTELPKKMTKKERQKTIENIEKEMKKAAKDLDFEKATELRDMLFELKAEG.

The Helicase ATP-binding domain maps to 28–414 (DGVNEGKRHQ…HTDEMVEQII (387 aa)). Residue 41–48 (GATGTGKT) participates in ATP binding. Positions 94–117 (YYDYYQPEAYVPSTDTFIEKDASI) match the Beta-hairpin motif. The Helicase C-terminal domain occupies 432–598 (QIDDLLSEIQ…TINKKIHDVI (167 aa)). A disordered region spans residues 603-624 (ESDETNQQQQTELPKKMTKKER). The UVR domain occupies 625-660 (QKTIENIEKEMKKAAKDLDFEKATELRDMLFELKAE).

It belongs to the UvrB family. In terms of assembly, forms a heterotetramer with UvrA during the search for lesions. Interacts with UvrC in an incision complex.

Its subcellular location is the cytoplasm. Functionally, the UvrABC repair system catalyzes the recognition and processing of DNA lesions. A damage recognition complex composed of 2 UvrA and 2 UvrB subunits scans DNA for abnormalities. Upon binding of the UvrA(2)B(2) complex to a putative damaged site, the DNA wraps around one UvrB monomer. DNA wrap is dependent on ATP binding by UvrB and probably causes local melting of the DNA helix, facilitating insertion of UvrB beta-hairpin between the DNA strands. Then UvrB probes one DNA strand for the presence of a lesion. If a lesion is found the UvrA subunits dissociate and the UvrB-DNA preincision complex is formed. This complex is subsequently bound by UvrC and the second UvrB is released. If no lesion is found, the DNA wraps around the other UvrB subunit that will check the other stand for damage. The polypeptide is UvrABC system protein B (Staphylococcus epidermidis (strain ATCC 35984 / DSM 28319 / BCRC 17069 / CCUG 31568 / BM 3577 / RP62A)).